A 165-amino-acid chain; its full sequence is MRAALFPGSFDPITWGHIDLVKRASLIFDKVIVLVANNSNKSYLLSDIERYELTFEVIMSLGWTKIFVDKYDGVILDYALKNNIGFIVRGVRAFHDFEFEFERYVVNNKLNSSIDTVFLPSSDKYLFVRSDLVKELIKNKNFNLSNFIPELVQKKLKSKFIDKLS.

Serine 9 is a binding site for substrate. Residues 9-10 (SF) and histidine 17 contribute to the ATP site. The substrate site is built by lysine 41, isoleucine 75, and arginine 89. ATP is bound by residues 90–92 (GVR), glutamate 100, and 125–131 (YLFVRSD).

Belongs to the bacterial CoaD family. As to quaternary structure, homohexamer. It depends on Mg(2+) as a cofactor.

The protein resides in the cytoplasm. It carries out the reaction (R)-4'-phosphopantetheine + ATP + H(+) = 3'-dephospho-CoA + diphosphate. It participates in cofactor biosynthesis; coenzyme A biosynthesis; CoA from (R)-pantothenate: step 4/5. Its function is as follows. Reversibly transfers an adenylyl group from ATP to 4'-phosphopantetheine, yielding dephospho-CoA (dPCoA) and pyrophosphate. The protein is Phosphopantetheine adenylyltransferase of Borrelia duttonii (strain Ly).